Consider the following 357-residue polypeptide: Alanine racemase (357 aa).

K33 acts as the Proton acceptor; specific for D-alanine in catalysis. Position 33 is an N6-(pyridoxal phosphate)lysine (K33). Residue R129 coordinates substrate. The active-site Proton acceptor; specific for L-alanine is the Y253. Residue M301 participates in substrate binding.

This sequence belongs to the alanine racemase family. Pyridoxal 5'-phosphate serves as cofactor.

The catalysed reaction is L-alanine = D-alanine. It participates in amino-acid biosynthesis; D-alanine biosynthesis; D-alanine from L-alanine: step 1/1. Functionally, catalyzes the interconversion of L-alanine and D-alanine. May also act on other amino acids. This chain is Alanine racemase (alr), found in Pseudomonas entomophila (strain L48).